A 403-amino-acid chain; its full sequence is Tyrosine--tRNA ligase (403 aa).

The short motif at 43 to 52 is the 'HIGH' region element; the sequence is PTAPDLHLGH. Positions 227–231 match the 'KMSKS' region motif; the sequence is KMSKS. Residue Lys-230 coordinates ATP. Residues 338–399 enclose the S4 RNA-binding domain; it reads LPIAQLLKQT…GKRKFARVTI (62 aa).

Belongs to the class-I aminoacyl-tRNA synthetase family. TyrS type 2 subfamily. As to quaternary structure, homodimer.

It is found in the cytoplasm. It catalyses the reaction tRNA(Tyr) + L-tyrosine + ATP = L-tyrosyl-tRNA(Tyr) + AMP + diphosphate + H(+). In terms of biological role, catalyzes the attachment of tyrosine to tRNA(Tyr) in a two-step reaction: tyrosine is first activated by ATP to form Tyr-AMP and then transferred to the acceptor end of tRNA(Tyr). This chain is Tyrosine--tRNA ligase, found in Nitrosospira multiformis (strain ATCC 25196 / NCIMB 11849 / C 71).